We begin with the raw amino-acid sequence, 148 residues long: 1,4-dihydroxy-2-naphthoyl-CoA hydrolase (148 aa).

D15 is a catalytic residue.

It belongs to the 4-hydroxybenzoyl-CoA thioesterase family. DHNA-CoA hydrolase subfamily.

The enzyme catalyses 1,4-dihydroxy-2-naphthoyl-CoA + H2O = 1,4-dihydroxy-2-naphthoate + CoA + H(+). Its pathway is cofactor biosynthesis; phylloquinone biosynthesis. It functions in the pathway quinol/quinone metabolism; 1,4-dihydroxy-2-naphthoate biosynthesis; 1,4-dihydroxy-2-naphthoate from chorismate: step 7/7. Catalyzes the hydrolysis of 1,4-dihydroxy-2-naphthoyl-CoA (DHNA-CoA) to 1,4-dihydroxy-2-naphthoate (DHNA), a reaction involved in phylloquinone (vitamin K1) biosynthesis. This chain is 1,4-dihydroxy-2-naphthoyl-CoA hydrolase, found in Nostoc sp. (strain PCC 7120 / SAG 25.82 / UTEX 2576).